The chain runs to 391 residues: uncharacterized protein (391 aa).

The 96-residue stretch at 235 to 330 folds into the HTH arsR-type domain; sequence VFILSRINLL…LYLKNETQKS (96 aa).

This is an uncharacterized protein from Methanocaldococcus jannaschii (strain ATCC 43067 / DSM 2661 / JAL-1 / JCM 10045 / NBRC 100440) (Methanococcus jannaschii).